The primary structure comprises 479 residues: Ubiquinone biosynthesis monooxygenase COQ6, mitochondrial (479 aa).

This sequence belongs to the UbiH/COQ6 family. In terms of assembly, component of a multi-subunit COQ enzyme complex, composed of at least COQ3, COQ4, COQ5, COQ6, COQ7 and COQ9. FAD is required as a cofactor.

The protein localises to the mitochondrion inner membrane. It catalyses the reaction 4-hydroxy-3-(all-trans-decaprenyl)benzoate + 2 reduced [2Fe-2S]-[ferredoxin] + O2 + 2 H(+) = 3,4-dihydroxy-5-(all-trans-decaprenyl)benzoate + 2 oxidized [2Fe-2S]-[ferredoxin] + H2O. The enzyme catalyses 2-methoxy-6-(all-trans-decaprenyl)phenol + 2 reduced [2Fe-2S]-[ferredoxin] + O2 + 2 H(+) = 2-methoxy-6-(all-trans-decaprenyl)benzene-1,4-diol + 2 oxidized [2Fe-2S]-[ferredoxin] + H2O. Its pathway is cofactor biosynthesis; ubiquinone biosynthesis. Functionally, FAD-dependent monooxygenase required for two non-consecutive steps during ubiquinone biosynthesis. Required for the C5-ring hydroxylation during ubiquinone biosynthesis by catalyzing the hydroxylation of 4-hydroxy-3-(all-trans-decaprenyl)benzoic acid to 3,4-dihydroxy-5-(all-trans-decaprenyl)benzoic acid. Also acts downstream of COQ4, for the C1-hydroxylation during ubiquinone biosynthesis by catalyzing the hydroxylation of 2-methoxy-6-(all-trans-decaprenyl)phenol to 2-methoxy-6-(all-trans-decaprenyl)benzene-1,4-diol. The electrons required for the hydroxylation reaction are funneled indirectly to coq6 from NADPH via a ferredoxin/ferredoxin reductase system. The polypeptide is Ubiquinone biosynthesis monooxygenase COQ6, mitochondrial (Schizosaccharomyces pombe (strain 972 / ATCC 24843) (Fission yeast)).